The primary structure comprises 389 residues: Arrestin-C (389 aa).

Belongs to the arrestin family. In terms of tissue distribution, retina and pineal gland.

In terms of biological role, may play a role in an as yet undefined retina-specific signal transduction. Could bind to photoactivated-phosphorylated red/green opsins. This chain is Arrestin-C (arr3), found in Lithobates pipiens (Northern leopard frog).